The chain runs to 138 residues: Photosystem II extrinsic protein U (138 aa).

A signal peptide spans 1–28 (MSRVVSALMGLVLMFGCAFFSVQPQAQA). The propeptide occupies 29 to 42 (LDLSNGFVSAAVLG).

This sequence belongs to the PsbU family. In terms of assembly, PSII is composed of 1 copy each of membrane proteins PsbA, PsbB, PsbC, PsbD, PsbE, PsbF, PsbH, PsbI, PsbJ, PsbK, PsbL, PsbM, PsbT, PsbX, PsbY, PsbZ, Psb30/Ycf12, peripheral proteins PsbO, CyanoQ (PsbQ), PsbU, PsbV and a large number of cofactors. It forms dimeric complexes.

It localises to the cellular thylakoid membrane. In terms of biological role, one of the extrinsic, lumenal subunits of photosystem II (PSII). PSII is a light-driven water plastoquinone oxidoreductase, using light energy to abstract electrons from H(2)O, generating a proton gradient subsequently used for ATP formation. The extrinsic proteins stabilize the structure of photosystem II oxygen-evolving complex (OEC), the ion environment of oxygen evolution and protect the OEC against heat-induced inactivation. The polypeptide is Photosystem II extrinsic protein U (Picosynechococcus sp. (strain ATCC 27264 / PCC 7002 / PR-6) (Agmenellum quadruplicatum)).